Reading from the N-terminus, the 530-residue chain is tRNA-2-methylthio-N(6)-dimethylallyladenosine synthase (530 aa).

Residues R19–H134 enclose the MTTase N-terminal domain. The [4Fe-4S] cluster site is built by C28, C63, C97, C171, C175, and C178. The 231-residue stretch at R157–E387 folds into the Radical SAM core domain. The TRAM domain maps to Q390–D460. The disordered stretch occupies residues V509–A530.

The protein belongs to the methylthiotransferase family. MiaB subfamily. As to quaternary structure, monomer. The cofactor is [4Fe-4S] cluster.

The protein resides in the cytoplasm. The enzyme catalyses N(6)-dimethylallyladenosine(37) in tRNA + (sulfur carrier)-SH + AH2 + 2 S-adenosyl-L-methionine = 2-methylsulfanyl-N(6)-dimethylallyladenosine(37) in tRNA + (sulfur carrier)-H + 5'-deoxyadenosine + L-methionine + A + S-adenosyl-L-homocysteine + 2 H(+). Catalyzes the methylthiolation of N6-(dimethylallyl)adenosine (i(6)A), leading to the formation of 2-methylthio-N6-(dimethylallyl)adenosine (ms(2)i(6)A) at position 37 in tRNAs that read codons beginning with uridine. This is tRNA-2-methylthio-N(6)-dimethylallyladenosine synthase from Clavibacter sepedonicus (Clavibacter michiganensis subsp. sepedonicus).